The sequence spans 622 residues: Polygalacturonase 1 beta-like protein 1 (622 aa).

The signal sequence occupies residues 1–21 (MRKQFVFLLPFLSRLYHVVIA). The FXXY 1 repeat unit spans residues 118-121 (FSVY). N125 carries an N-linked (GlcNAc...) asparagine glycan. FXXY repeat units follow at residues 126-129 (FTNY), 140-143 (FKKY), 154-157 (FRRY), 168-171 (FTGY), 182-185 (FNSY), 196-199 (FKNY), 210-213 (FKAY), 224-227 (FKTY), 239-242 (FTSY), 253-256 (FSSY), and 267-270 (FSNY). N-linked (GlcNAc...) asparagine glycosylation occurs at N278. FXXY repeat units lie at residues 281 to 284 (FKGY), 295 to 298 (FKSY), 309 to 312 (FLNY), 323 to 326 (FSSY), 337 to 340 (FVNY), 351 to 354 (FSGY), and 365 to 368 (FKTY). N-linked (GlcNAc...) asparagine glycosylation is present at N371. FXXY repeat units lie at residues 374 to 377 (FKDY) and 384 to 387 (FAKY). 2 N-linked (GlcNAc...) asparagine glycosylation sites follow: N388 and N461. In terms of domain architecture, BURP spans 407–621 (FFRESMLKEG…FENDMNWAIA (215 aa)).

In terms of tissue distribution, expressed in flowers and stems.

It localises to the secreted. Its subcellular location is the extracellular space. The protein localises to the apoplast. It is found in the cell wall. Involved in cell size determination. This is Polygalacturonase 1 beta-like protein 1 from Arabidopsis thaliana (Mouse-ear cress).